We begin with the raw amino-acid sequence, 284 residues long: Cell wall mannoprotein 1 (284 aa).

The signal sequence occupies residues 1–17 (MRFSALLVTLGLTGALA). The span at 176-234 (SSTGTASSSAPATETATATETSTATGTVTETATSTPVIPTGTASGSASATPSTTATPTT) shows a compositional bias: low complexity. Positions 176-252 (SSTGTASSSA…SSTGTATAST (77 aa)) are disordered.

This sequence belongs to the cell wall mannoprotein 1 family. In terms of processing, galactomannoprotein, glycosylated.

Its subcellular location is the secreted. It is found in the cell wall. Its function is as follows. Constitutive protein of the cell wall. Antigen target of host humoral immune response. This chain is Cell wall mannoprotein 1, found in Aspergillus fumigatus (Neosartorya fumigata).